Reading from the N-terminus, the 455-residue chain is Bifunctional protein GlmU (455 aa).

The pyrophosphorylase stretch occupies residues 1–228 (MNNTLTTIIL…EFEIEGVNNR (228 aa)). UDP-N-acetyl-alpha-D-glucosamine-binding positions include 10–13 (LAAG), K24, Q75, 80–81 (GT), 102–104 (YGD), G138, E153, N168, and N226. D104 contributes to the Mg(2+) binding site. A Mg(2+)-binding site is contributed by N226. The linker stretch occupies residues 229–249 (QQLAQLERKWQAKLVEDLQVQ). The N-acetyltransferase stretch occupies residues 250–455 (GVQFADPNRV…DNYQRPEKKK (206 aa)). 2 residues coordinate UDP-N-acetyl-alpha-D-glucosamine: R332 and K350. The Proton acceptor role is filled by H362. The UDP-N-acetyl-alpha-D-glucosamine site is built by Y365 and N376. Residues A379, 385–386 (NY), A422, and R439 contribute to the acetyl-CoA site.

It in the N-terminal section; belongs to the N-acetylglucosamine-1-phosphate uridyltransferase family. This sequence in the C-terminal section; belongs to the transferase hexapeptide repeat family. Homotrimer. Mg(2+) serves as cofactor.

The protein resides in the cytoplasm. The enzyme catalyses alpha-D-glucosamine 1-phosphate + acetyl-CoA = N-acetyl-alpha-D-glucosamine 1-phosphate + CoA + H(+). The catalysed reaction is N-acetyl-alpha-D-glucosamine 1-phosphate + UTP + H(+) = UDP-N-acetyl-alpha-D-glucosamine + diphosphate. The protein operates within nucleotide-sugar biosynthesis; UDP-N-acetyl-alpha-D-glucosamine biosynthesis; N-acetyl-alpha-D-glucosamine 1-phosphate from alpha-D-glucosamine 6-phosphate (route II): step 2/2. Its pathway is nucleotide-sugar biosynthesis; UDP-N-acetyl-alpha-D-glucosamine biosynthesis; UDP-N-acetyl-alpha-D-glucosamine from N-acetyl-alpha-D-glucosamine 1-phosphate: step 1/1. It participates in bacterial outer membrane biogenesis; LPS lipid A biosynthesis. In terms of biological role, catalyzes the last two sequential reactions in the de novo biosynthetic pathway for UDP-N-acetylglucosamine (UDP-GlcNAc). The C-terminal domain catalyzes the transfer of acetyl group from acetyl coenzyme A to glucosamine-1-phosphate (GlcN-1-P) to produce N-acetylglucosamine-1-phosphate (GlcNAc-1-P), which is converted into UDP-GlcNAc by the transfer of uridine 5-monophosphate (from uridine 5-triphosphate), a reaction catalyzed by the N-terminal domain. The polypeptide is Bifunctional protein GlmU (Psychrobacter sp. (strain PRwf-1)).